Consider the following 219-residue polypeptide: Neurotrophic factor BDNF precursor form (219 aa).

Residues 1–5 (SCMKA) form the signal peptide. The propeptide occupies 6 to 114 (APMKEVSIRG…AANMSMRVRR (109 aa)). Asn-107 carries N-linked (GlcNAc...) asparagine glycosylation. Cysteines 127 and 194 form a disulfide.

The protein belongs to the NGF-beta family.

The protein localises to the secreted. Functionally, promotes the survival of neuronal populations that are all located either in the central nervous system or directly connected to it. This chain is Neurotrophic factor BDNF precursor form (BDNF), found in Loxocemus bicolor (Mexican burrowing python).